Reading from the N-terminus, the 414-residue chain is Sarcosine oxidase subunit beta (414 aa).

The FAD site is built by G42, H43, E64, N72, T77, and I79. At H183 the chain carries Tele-8alpha-FMN histidine. FAD is bound by residues V207, G364, G367, and K369.

The protein belongs to the SoxB family. Heterotetramer composed of subunits alpha (SoxA), beta (SoxB), gamma (SoxG) and delta (SoxD). FAD is required as a cofactor. Requires FMN as cofactor.

Its subcellular location is the cytoplasm. It catalyses the reaction sarcosine + (6S)-5,6,7,8-tetrahydrofolate + O2 = (6R)-5,10-methylene-5,6,7,8-tetrahydrofolate + glycine + H2O2. The catalysed reaction is sarcosine + O2 + H2O = formaldehyde + glycine + H2O2. In terms of biological role, in the presence of tetrahydrofolate, catalyzes the oxidative demethylation of sarcosine to yield glycine, 5,10-methylenetetrahydrofolate and hydrogen peroxide. In the absence of tetrahydrofolate, catalyzes the oxidative demethylation of sarcosine to yield glycine, formaldehyde and hydrogen peroxide. This chain is Sarcosine oxidase subunit beta (soxB), found in Rhodobacter capsulatus (strain ATCC BAA-309 / NBRC 16581 / SB1003).